A 343-amino-acid chain; its full sequence is MSTATGFSRIFSGVQPTSDSLHLGNALGAITQWVALQYDHPDEYEAFFCVVDLHAITIAQDPETLWRRTLVTAAQYLALGIDPGRAVVFVQSHVPAHTQLAWVLGCFTGFGQASRMTQFKDKALRQGADSTTVGLFTYPVLQAADVLAYDTDLVPVGEDQRQHLELARDLAQRFNSRFPDTFVVPDMFIPKMAAKIYDLADPTSKMSKSASSDAGLINLLDDPALSVKKIRAAVTDSEREIRYDPEVKPGVSNLLNIQSAVTGVDVDTLVQRYVGHGYGDLKKDTAEAVVEFVSPIKDRVDELMADLTELEVVLAVGAQRAQDVAGKTMQRVYDRLGFLPQRG.

ATP-binding positions include Gln15–Thr17 and Gly24–Asn25. Positions Pro16 to Asn25 match the 'HIGH' region motif. Asp145 contributes to the L-tryptophan binding site. ATP is bound by residues Gly157 to Asp159, Ile196, and Lys205 to Ser209. The 'KMSKS' region motif lies at Lys205 to Ser209.

It belongs to the class-I aminoacyl-tRNA synthetase family. In terms of assembly, homodimer.

It localises to the cytoplasm. It carries out the reaction tRNA(Trp) + L-tryptophan + ATP = L-tryptophyl-tRNA(Trp) + AMP + diphosphate + H(+). Its function is as follows. Catalyzes the attachment of tryptophan to tRNA(Trp). This is Tryptophan--tRNA ligase from Mycobacterium leprae (strain TN).